A 161-amino-acid polypeptide reads, in one-letter code: MKRIIRISFTDAEATDSSSDEDTEERGGASQTRRRGKRLVKEIVIDPSDSADKLDVCKTRFKIRIPAEFLKTAKTEKKYRGVRQRPWGKWVAEIRCGRGACKGRRDRLWLGTFNTAEEAALAYDNASIKLIGPHAPTNFGLPAENQEDKTVIGASEVARGA.

A disordered region spans residues 1-35 (MKRIIRISFTDAEATDSSSDEDTEERGGASQTRRR). Positions 78-140 (KYRGVRQRPW…IGPHAPTNFG (63 aa)) form a DNA-binding region, AP2/ERF.

Belongs to the AP2/ERF transcription factor family. ERF subfamily.

It is found in the nucleus. Its function is as follows. Probably acts as a transcriptional activator. Binds to the GCC-box pathogenesis-related promoter element. May be involved in the regulation of gene expression by stress factors and by components of stress signal transduction pathways. In Arabidopsis thaliana (Mouse-ear cress), this protein is Ethylene-responsive transcription factor ERF070 (ERF070).